A 178-amino-acid polypeptide reads, in one-letter code: Crossover junction endodeoxyribonuclease RuvC (178 aa).

Residues aspartate 21, glutamate 81, and histidine 154 contribute to the active site. The Mg(2+) site is built by aspartate 21, glutamate 81, and histidine 154.

This sequence belongs to the RuvC family. In terms of assembly, homodimer which binds Holliday junction (HJ) DNA. The HJ becomes 2-fold symmetrical on binding to RuvC with unstacked arms; it has a different conformation from HJ DNA in complex with RuvA. In the full resolvosome a probable DNA-RuvA(4)-RuvB(12)-RuvC(2) complex forms which resolves the HJ. It depends on Mg(2+) as a cofactor.

The protein localises to the cytoplasm. The catalysed reaction is Endonucleolytic cleavage at a junction such as a reciprocal single-stranded crossover between two homologous DNA duplexes (Holliday junction).. Its function is as follows. The RuvA-RuvB-RuvC complex processes Holliday junction (HJ) DNA during genetic recombination and DNA repair. Endonuclease that resolves HJ intermediates. Cleaves cruciform DNA by making single-stranded nicks across the HJ at symmetrical positions within the homologous arms, yielding a 5'-phosphate and a 3'-hydroxyl group; requires a central core of homology in the junction. The consensus cleavage sequence is 5'-(A/T)TT(C/G)-3'. Cleavage occurs on the 3'-side of the TT dinucleotide at the point of strand exchange. HJ branch migration catalyzed by RuvA-RuvB allows RuvC to scan DNA until it finds its consensus sequence, where it cleaves and resolves the cruciform DNA. The chain is Crossover junction endodeoxyribonuclease RuvC from Treponema denticola (strain ATCC 35405 / DSM 14222 / CIP 103919 / JCM 8153 / KCTC 15104).